Reading from the N-terminus, the 1176-residue chain is Nitrite reductase [NAD(P)H] (1176 aa).

A disordered region spans residues 1 to 23; sequence MANTSLDMASSTSPSPSPESTTT. Residues 10-23 show a composition bias toward low complexity; it reads SSTSPSPSPESTTT. 26 to 60 serves as a coordination point for FAD; that stretch reads KRIVVVGLGMVGIAFIEKLIKLDTQRQYEIVVIGE. Residue 183 to 215 coordinates NAD(+); it reads STGVVVGGGLLGLEAAKALMDLQVFGRVVVIER. The [2Fe-2S] cluster site is built by C496, C498, C531, and C534. [4Fe-4S] cluster-binding residues include C717, C723, C757, and C761. Position 761 (C761) interacts with siroheme. The 153-residue stretch at 942–1094 folds into the Rieske; atypical domain; the sequence is SYFQGADDLP…VEERDDGMVY (153 aa). Residues C981 and H983 each coordinate [2Fe-2S] cluster. Composition is skewed to low complexity over residues 998 to 1008 and 1030 to 1049; these read PSPSSCSSSAL and PTSS…TNPS. The tract at residues 998-1051 is disordered; sequence PSPSSCSSSALPPSPPSTPPRSSSPVTSPPQSPTSSATPATTASSSCTTNPSGP. Residues C1058 and H1061 each coordinate [2Fe-2S] cluster. Residues 1124–1139 show a composition bias toward basic and acidic residues; that stretch reads LRELDELNKSKGVEGK. Residues 1124–1157 form a disordered region; sequence LRELDELNKSKGVEGKKGRRGRKPGASEAGKEVG.

It belongs to the nitrite and sulfite reductase 4Fe-4S domain family. In terms of assembly, homodimer. The cofactor is siroheme. Requires [4Fe-4S] cluster as cofactor. FAD is required as a cofactor. [2Fe-2S] cluster serves as cofactor.

It catalyses the reaction NH4(+) + 3 NADP(+) + 2 H2O = nitrite + 3 NADPH + 5 H(+). The catalysed reaction is NH4(+) + 3 NAD(+) + 2 H2O = nitrite + 3 NADH + 5 H(+). The protein operates within nitrogen metabolism; nitrate reduction (assimilation). This is Nitrite reductase [NAD(P)H] (nit-6) from Neurospora crassa (strain ATCC 24698 / 74-OR23-1A / CBS 708.71 / DSM 1257 / FGSC 987).